Consider the following 477-residue polypeptide: M-phase inducer phosphatase 3 (477 aa).

The interval 1–20 (MSAEFFSSKREEGSLASGPS) is disordered. Ser2 is modified (N-acetylserine). Ser20 and Ser38 each carry phosphoserine. Residue Thr48 is modified to Phosphothreonine; by CDK1. Phosphoserine occurs at positions 58, 62, and 65. Thr68 bears the Phosphothreonine; by CDK1 mark. Ser123 carries the phosphoserine; by CDK1 modification. At Ser130 the chain carries Phosphoserine. Thr131 is subject to Phosphothreonine. Ser169 carries the post-translational modification Phosphoserine; by CDK1. Phosphoserine; by PLK3 is present on residues Ser192 and Ser199. Residue Ser218 is modified to Phosphoserine; by CDK1. A Phosphoserine; by CHEK1, CHEK2, BRSK1, MAPK14 AND MARK3 modification is found at Ser220. The Rhodanese domain occupies 325-432 (LIEKFYIIDC…FFPEYMELCE (108 aa)). Cys381 is a catalytic residue. Ser476 carries the post-translational modification Phosphoserine.

This sequence belongs to the MPI phosphatase family. In terms of assembly, interacts with MAPK14 and 14-3-3 proteins. When phosphorylated on Ser-130 and/or Thr-131, interacts with PLK1. Interacts with MARK3/C-TAK1. Post-translationally, phosphorylated by CHEK1 and MAPK14 at Ser-220. This phosphorylation creates a binding site for 14-3-3 protein and inhibits the phosphatase. Phosphorylated by PLK4. Phosphorylated by PLK1, leading to activate the phosphatase activity. Phosphorylation by PLK3 at Ser-192 promotes nuclear translocation. Ser-199 is a minor phosphorylation site. Phosphorylation by CDK1 occurs at G2 and G2-M transition and leads to increased activity.

Its subcellular location is the nucleus. It carries out the reaction O-phospho-L-tyrosyl-[protein] + H2O = L-tyrosyl-[protein] + phosphate. Functionally, functions as a dosage-dependent inducer in mitotic control. Tyrosine protein phosphatase required for progression of the cell cycle. When phosphorylated, highly effective in activating G2 cells into prophase. Directly dephosphorylates CDK1 and activates its kinase activity. The polypeptide is M-phase inducer phosphatase 3 (CDC25C) (Bos taurus (Bovine)).